Consider the following 485-residue polypeptide: Ribulose bisphosphate carboxylase large chain (485 aa).

The substrate site is built by Asn124 and Thr174. The active-site Proton acceptor is the Lys176. Lys178 is a substrate binding site. Positions 202, 204, and 205 each coordinate Mg(2+). The residue at position 202 (Lys202) is an N6-carboxylysine. His294 functions as the Proton acceptor in the catalytic mechanism. Substrate contacts are provided by Arg295, His327, and Ser379.

The protein belongs to the RuBisCO large chain family. Type I subfamily. As to quaternary structure, heterohexadecamer of 8 large chains and 8 small chains. Mg(2+) is required as a cofactor.

It catalyses the reaction 2 (2R)-3-phosphoglycerate + 2 H(+) = D-ribulose 1,5-bisphosphate + CO2 + H2O. The catalysed reaction is D-ribulose 1,5-bisphosphate + O2 = 2-phosphoglycolate + (2R)-3-phosphoglycerate + 2 H(+). Functionally, ruBisCO catalyzes two reactions: the carboxylation of D-ribulose 1,5-bisphosphate, the primary event in carbon dioxide fixation, as well as the oxidative fragmentation of the pentose substrate. Both reactions occur simultaneously and in competition at the same active site. The chain is Ribulose bisphosphate carboxylase large chain from Rhodopseudomonas palustris (strain BisA53).